A 615-amino-acid chain; its full sequence is Alpha-terpinene synthase TPS33PK, chloroplastic (615 aa).

Residues 1-33 constitute a chloroplast transit peptide; the sequence is MFCRLGVHQFSPLSLILNTTKLARASTLSSACY. The (2E)-geranyl diphosphate site is built by E334, V371, L375, L513, and S516. Residues V371 and L375 each contribute to the Mg(2+) site. Positions 371–375 match the DDXXD motif motif; that stretch reads VYGTL. Mg(2+)-binding residues include S516, M520, and D524.

It belongs to the terpene synthase family. Tpsb subfamily. It depends on Mg(2+) as a cofactor. Requires Mn(2+) as cofactor.

It localises to the plastid. The protein resides in the chloroplast. The enzyme catalyses (2E)-geranyl diphosphate = alpha-terpinene + diphosphate. The catalysed reaction is (2E)-geranyl diphosphate = gamma-terpinene + diphosphate. It functions in the pathway secondary metabolite biosynthesis; terpenoid biosynthesis. Involved in monoterpene (C10) olefins biosynthesis, constituants of cannabinoids and terpenoids-rich resins. Catalyzes mainly the conversion of (2E)-geranyl diphosphate to alpha-terpinene and gamma-terpinene. This Cannabis sativa (Hemp) protein is Alpha-terpinene synthase TPS33PK, chloroplastic.